Here is a 249-residue protein sequence, read N- to C-terminus: Proteasome subunit alpha (249 aa).

This sequence belongs to the peptidase T1A family. In terms of assembly, the 20S proteasome core is composed of 14 alpha and 14 beta subunits that assemble into four stacked heptameric rings, resulting in a barrel-shaped structure. The two inner rings, each composed of seven catalytic beta subunits, are sandwiched by two outer rings, each composed of seven alpha subunits. The catalytic chamber with the active sites is on the inside of the barrel. Has a gated structure, the ends of the cylinder being occluded by the N-termini of the alpha-subunits. Is capped at one or both ends by the proteasome regulatory ATPase, PAN.

Its subcellular location is the cytoplasm. Its activity is regulated as follows. The formation of the proteasomal ATPase PAN-20S proteasome complex, via the docking of the C-termini of PAN into the intersubunit pockets in the alpha-rings, triggers opening of the gate for substrate entry. Interconversion between the open-gate and close-gate conformations leads to a dynamic regulation of the 20S proteasome proteolysis activity. Component of the proteasome core, a large protease complex with broad specificity involved in protein degradation. The polypeptide is Proteasome subunit alpha (Methanosarcina barkeri (strain Fusaro / DSM 804)).